The chain runs to 532 residues: Protein tweety homolog 2 (532 aa).

Residues 1–44 are Extracellular-facing; that stretch reads MPAARVEYIAPWWVVWLHSVPHLGLRLQRVDSTFSPGDETYQES. A helical transmembrane segment spans residues 45-65; it reads LLFLGVLAAIGLGLNLIFLTV. Residues 66 to 87 lie on the Cytoplasmic side of the membrane; the sequence is YLVCTCCCRRDHTVQTKQQESC. The chain crosses the membrane as a helical span at residues 88 to 108; sequence CVTWTAVVAGLLCCAAVGVGF. Residues 109–213 lie on the Extracellular side of the membrane; that stretch reads YGNSETNDGM…QTAYVEYYRW (105 aa). Ca(2+) is bound by residues glutamate 113 and aspartate 116. The N-linked (GlcNAc...) asparagine glycan is linked to asparagine 129. Residues 164–166 carry the RGD motif; sequence RGD. At threonine 199 the chain carries Phosphothreonine. The helical transmembrane segment at 214-234 threads the bilayer; the sequence is LSYLLLFILDLVICLVTCLGL. The Cytoplasmic portion of the chain corresponds to 235 to 240; the sequence is ARRSKC. The chain crosses the membrane as a helical span at residues 241–261; it reads LLASMLCCGILTLILSWASLA. At 262-385 the chain is on the extracellular side; sequence ADAAAAVGTS…DALTGICYDG (124 aa). 2 disulfide bridges follow: cysteine 274/cysteine 382 and cysteine 300/cysteine 367. Residues asparagine 283 and asparagine 352 are each glycosylated (N-linked (GlcNAc...) asparagine). Residues 386–406 traverse the membrane as a helical segment; it reads IEGLLFLGLFSLLAALAFSTL. Residues 407–532 are Cytoplasmic-facing; it reads TCAGPRAWKY…EHLRHYEFPS (126 aa). Serine 504 is subject to Phosphoserine. Residues 506-509 carry the PY-motif; mediates interaction with NEDD4L motif; the sequence is PPTY.

Belongs to the tweety family. In terms of assembly, forms cis-homodimers in the presence of Ca(+2) and forms monomers and trans-dimers in the absence of Ca(2+). Interacts with NEDD4L. In terms of processing, ubiquitinated by NEDD4L, leading to its proteasomal degradation.

The protein localises to the cell membrane. It catalyses the reaction chloride(in) = chloride(out). It carries out the reaction L-glutamate(out) = L-glutamate(in). Its activity is regulated as follows. Inhibited by (4-[(2-butyl-6,7-dichloro-2- cyclopentyl-2,3-dihydro-1-oxo-1H-inden-5-yl)oxy]butanoic acid). Functionally, calcium-independent, swelling-dependent volume-regulated anion channel (VRAC-swell) which plays a pivotal role in the process of regulatory volume decrease (RVD) in the brain through the efflux of anions like chloride and organic osmolytes like glutamate. Probable large-conductance Ca(2+)-activated chloride channel. The polypeptide is Protein tweety homolog 2 (Ttyh2) (Mus musculus (Mouse)).